A 119-amino-acid chain; its full sequence is MARVKRGVTAHAKHKKVYKVTKGFSGRRKNTIRAAKAAADKAGQYAFRDRKRKKRTFRALWIQRLNAAVRPFGMTYSRFIDGLSKSGITVDRKVLSDLAINEPAAFQAIAEKAKAALAA.

It belongs to the bacterial ribosomal protein bL20 family.

Functionally, binds directly to 23S ribosomal RNA and is necessary for the in vitro assembly process of the 50S ribosomal subunit. It is not involved in the protein synthesizing functions of that subunit. This Nitrobacter winogradskyi (strain ATCC 25391 / DSM 10237 / CIP 104748 / NCIMB 11846 / Nb-255) protein is Large ribosomal subunit protein bL20.